Here is a 526-residue protein sequence, read N- to C-terminus: MGRLRPEEISSILKGAITDYESRVRTEEVGQVLEVGDGIARVHGLSNVMYQEMVEFEDARGEKVIGLALNLEEDNVGVIIAGDDRYILEGSTVRRTGRLASVPVGQGVLGRVINALGQPIDGRGEIQAEETRPVEIIAPGIIRRKDVDTPLQTGIKAIDSMIPIGRGQRELIIGDRKTGKTALAVDTIINQHDQNVKCIYVAVGQKDSAVAGVVAQLEEYGAMEYTTVINASASQPAPLQYLAPYAGCAIGEYFMHRGEDALVIYDDLSKHAVAYRQMMLLLRRPPGREAYPGDIFYLHSRLLERAARMSEEYGGGSLTALPIIETKAGDISAYIPTNVISITDGQIFLDLDLFNANQRPAIDVGLSVSRVGSSAQIKAMKKVAGTLKLDLSQYRELASFAQFGSDLDKATQETLARGERLTALLKQRERDPMPVEEQVAVIFGGTQGLLREVEPDDVPDWEAQLREYLRSSHEDLLKDIREKKELTDETAERLREAIERFNEGFEPARSEVKVETRPQEEEGEEG.

174-181 (GDRKTGKT) lines the ATP pocket. The segment covering 505–520 (FEPARSEVKVETRPQE) has biased composition (basic and acidic residues). Positions 505–526 (FEPARSEVKVETRPQEEEGEEG) are disordered.

It belongs to the ATPase alpha/beta chains family. F-type ATPases have 2 components, CF(1) - the catalytic core - and CF(0) - the membrane proton channel. CF(1) has five subunits: alpha(3), beta(3), gamma(1), delta(1), epsilon(1). CF(0) has three main subunits: a(1), b(2) and c(9-12). The alpha and beta chains form an alternating ring which encloses part of the gamma chain. CF(1) is attached to CF(0) by a central stalk formed by the gamma and epsilon chains, while a peripheral stalk is formed by the delta and b chains.

The protein localises to the cell membrane. It catalyses the reaction ATP + H2O + 4 H(+)(in) = ADP + phosphate + 5 H(+)(out). Produces ATP from ADP in the presence of a proton gradient across the membrane. The alpha chain is a regulatory subunit. The polypeptide is ATP synthase subunit alpha (Rubrobacter xylanophilus (strain DSM 9941 / JCM 11954 / NBRC 16129 / PRD-1)).